A 472-amino-acid polypeptide reads, in one-letter code: MALVARSICVSYDEIAGICNNVSHRNFKKWVQWKNPFLFQDDARRNIRFNDRKLSCTKFIGASEKLQHSKSPKSGLISCGWEVNSSKVVSNAVIPKKWNLLKLKVVEVTAIVACTFFVMSSAQAVDALKTCTCLLKECRIELAKCIANPSCAANVACLQTCNNRPDETECQIKCGDLFANKVVDEFNECAVSRKKCVPQKSDVGEFPVPDPSVLVKSFNMADFNGKWFISSGLNPTFDAFDCQLHEFHLEDGKLVGNLSWRIKTPDGGFFTRTAVQKFAQDPSQPGMLYNHDNAYLHYQDDWYILSSKIENQPDDYVFVYYRGRNDAWDGYGGAFLYTRSATVPENIVPELNRAAQSVGKDFNKFIRTDNTCGPEPPLVERLEKTVEEGERTIIKEVEQLEGEIEGDLEKVGKTEMTLFQRLLEGFQELQKDEEYFLKELNKEERELLEDLKMEAGEVEKLFGRALPIRKLR.

6 disulfides stabilise this stretch: cysteine 133–cysteine 151, cysteine 138–cysteine 145, cysteine 157–cysteine 174, cysteine 161–cysteine 170, cysteine 189–cysteine 196, and cysteine 242–cysteine 372. Residues 379-462 (VERLEKTVEE…MEAGEVEKLF (84 aa)) are a coiled coil.

The protein belongs to the calycin superfamily. Lipocalin family. Disulfide bonds. Reduction of the disulfides results in loss of a rigid structure, a decrease in thermal stability of 15 degrees Celsius and a loss of activity.

The protein localises to the plastid. The protein resides in the chloroplast thylakoid membrane. It catalyses the reaction all-trans-violaxanthin + 2 L-ascorbate = all-trans-zeaxanthin + 2 L-dehydroascorbate + 2 H2O. Its activity is regulated as follows. Irreversibly inhibited by DTT and iodoacetamide at pH 5.7 or pH 5.2, but not at pH 7.2. Regulated through Ca(2+) gating of H(+) flux at the CFoH(+) channel. Requires the presence of lipids forming reverse hexagonal structures such as monogalactosyldiacylglyceride (MGDG) or phosphatidylethanolamine. A negative curvature elastic stress in the thylakoid lipid bilayer is required for VDE1 activity. Part of the xanthophyll (or violaxanthin) cycle for controlling the concentration of zeaxanthin in chloroplasts. Catalyzes the two-step mono de-epoxidation reaction. Stereospecific for all-trans xanthophylls. Zeaxanthin induces the dissipation of excitation energy in the chlorophyll of the light-harvesting protein complex of photosystem II. This is Violaxanthin de-epoxidase, chloroplastic from Spinacia oleracea (Spinach).